The chain runs to 553 residues: Tether containing UBX domain for GLUT4 (553 aa).

Ala2 carries the N-acetylalanine modification. Positions 182–202 (PGSLGSSASAGQAAASAPLPL) are enriched in low complexity. A disordered region spans residues 182-324 (PGSLGSSASA…REPVDREPVV (143 aa)). Ser184 is modified (phosphoserine). Basic and acidic residues predominate over residues 206–217 (ELSRGDLSRPED). Low complexity predominate over residues 260-280 (RPLTSSSAKLPKSLSSPGGPS). A Phosphoserine modification is found at Ser275. Over residues 296-324 (EQERERDPQQEQERERPVDREPVDREPVV) the composition is skewed to basic and acidic residues. Residues 317-380 (PVDREPVVCH…LVTKAFREAQ (64 aa)) are interaction with GLUT4. Residues 386-462 (ERYPKVALRV…NLFPAALVHL (77 aa)) enclose the UBX domain. Residues 499–536 (GSPSPLPAPDPAPKSEPAAEEGALVPPEPIPGTAQPVK) form a disordered region. Phosphoserine is present on residues Ser500 and Ser502. Residues 502–512 (SPLPAPDPAPK) show a composition bias toward pro residues.

As to quaternary structure, interacts with GLUT4. Interacts with VCPKMT. Interacts with VCP. Ubiquitous. Highly expressed in testis, heart, skeletal muscle and pancreas.

It localises to the endomembrane system. The protein resides in the endoplasmic reticulum-Golgi intermediate compartment membrane. Its subcellular location is the cytoplasm. The protein localises to the nucleus. Functionally, tethering protein that sequesters GLUT4-containing vesicles in the cytoplasm in the absence of insulin. Modulates the amount of GLUT4 that is available at the cell surface. Enhances VCP methylation catalyzed by VCPKMT. The chain is Tether containing UBX domain for GLUT4 (ASPSCR1) from Homo sapiens (Human).